We begin with the raw amino-acid sequence, 878 residues long: Phosphoenolpyruvate carboxylase (878 aa).

Residues His140 and Lys545 contribute to the active site.

It belongs to the PEPCase type 1 family. Mg(2+) serves as cofactor.

It catalyses the reaction oxaloacetate + phosphate = phosphoenolpyruvate + hydrogencarbonate. Functionally, forms oxaloacetate, a four-carbon dicarboxylic acid source for the tricarboxylic acid cycle. This is Phosphoenolpyruvate carboxylase from Pseudomonas syringae pv. syringae (strain B728a).